A 101-amino-acid polypeptide reads, in one-letter code: Small ribosomal subunit protein uS14 (101 aa).

Belongs to the universal ribosomal protein uS14 family. In terms of assembly, part of the 30S ribosomal subunit. Contacts proteins S3 and S10.

Its function is as follows. Binds 16S rRNA, required for the assembly of 30S particles and may also be responsible for determining the conformation of the 16S rRNA at the A site. The polypeptide is Small ribosomal subunit protein uS14 (Hyphomonas neptunium (strain ATCC 15444)).